Here is a 385-residue protein sequence, read N- to C-terminus: MPKLTDRNRDRDREKKKRRRRDDSYDDYEEEGGISGWKLGLVVGVIVVCFAMLYPTLFHPMLMGFLGRSSQPAPSINQQRPPIHPAMGGGGGQRHPGGYPSRPDVHPAMRMAQAQAEGQSGGSKGMFTWMLPIYTIGVVLFLLYTLFKSKGKKAKRKKRNYFDSEDDSEDSEMETKYGGKFGKKKLKGLQERLRQTEDAMSKILEQLESVQAGANPVDLDAADKLALELEEDKSAKEAVGLTETNEQYIKDLEVALKEFQSLSKAYDKEKMKKLKRKDSSSEEEEEEEEEEEEEEEELSELSEVEEEEEEKPVKKGKKVVDQKKPAKKAILRQKSTSEEEEETRIADKKAEEEEEEGIDIDFEIREHAERNKKDKNLRRRRPKKT.

Basic and acidic residues predominate over residues 1–13; sequence MPKLTDRNRDRDR. A disordered region spans residues 1–31; that stretch reads MPKLTDRNRDRDREKKKRRRRDDSYDDYEEE. The interval 32–152 is sufficient for function in acetylcholine receptor folding; sequence GGISGWKLGL…LYTLFKSKGK (121 aa). The chain crosses the membrane as a helical span at residues 39-59; the sequence is LGLVVGVIVVCFAMLYPTLFH. Positions 72–105 are disordered; it reads PAPSINQQRPPIHPAMGGGGGQRHPGGYPSRPDV. A helical membrane pass occupies residues 127–147; that stretch reads FTWMLPIYTIGVVLFLLYTLF. 2 disordered regions span residues 157-176 and 269-385; these read KKRNYFDSEDDSEDSEMETK and EKMK…PKKT. 3 stretches are compositionally biased toward acidic residues: residues 163–172, 281–310, and 352–361; these read DSEDDSEDSE, SEEEEEEEEEEEEEEEELSELSEVEEEEEE, and EEEEEGIDID. Basic and acidic residues predominate over residues 362-374; it reads FEIREHAERNKKD. Positions 375 to 385 are enriched in basic residues; it reads KNLRRRRPKKT.

Belongs to the ric-3 family. In terms of assembly, interacts with the deg-3/des-2 acetylcholine receptor.

The protein resides in the endoplasmic reticulum membrane. Required for maturation and cell surface expression of acetylcholine receptors. The protein is Resistance to inhibitors of cholinesterase protein 3 (ric-3) of Caenorhabditis briggsae.